Here is a 203-residue protein sequence, read N- to C-terminus: Putative phosphoserine phosphatase 2 (203 aa).

Residue His-9 is the Tele-phosphohistidine intermediate of the active site. The active site involves His-149.

Belongs to the histidine phosphatase superfamily. Metal-independent phosphoserine phosphatase family. Heterodimer with PspA. The PspB subunit appears to have no or considerably lower PSP activity compared with that of PspA.

The catalysed reaction is O-phospho-L-serine + H2O = L-serine + phosphate. It catalyses the reaction O-phospho-D-serine + H2O = D-serine + phosphate. Its pathway is amino-acid biosynthesis; L-serine biosynthesis; L-serine from 3-phospho-D-glycerate: step 3/3. With respect to regulation, activity is not inhibited by EDTA in vitro, nor enhanced by the addition of Mg(2+). Functionally, part of a complex that catalyzes the dephosphorylation of L-phosphoserine to serine and inorganic phosphate. Is poorly or not active toward D-phosphoserine, DL-phosphothreonine, 3-phosphoglycerate, para-nitrophenylphosphate, and fructose-6-phosphate. Does not display phosphoglycerate mutase activity. This is Putative phosphoserine phosphatase 2 (pspB) from Hydrogenobacter thermophilus (strain DSM 6534 / IAM 12695 / TK-6).